The sequence spans 183 residues: MDIDPYKEFGASTELISFLPADFFPSVRDLLDTAAALYREALESPEHCSHHHTALRQAILCWGELMTLATWVGNNLQDPASRDLVVNYVNTNMGLKIRQLLWFHISCLTFGRETVLEYLVSFGVWIRTPPAYRPPNAPILSTLPETTVVRRRGRSPRRRTPSPRRRRSQSPRRRRSQSRESQC.

Residues 136-183 (NAPILSTLPETTVVRRRGRSPRRRTPSPRRRRSQSPRRRRSQSRESQC) form a disordered region. The segment covering 149-176 (VRRRGRSPRRRTPSPRRRRSQSPRRRRS) has biased composition (basic residues). Phosphoserine; by host occurs at positions 155, 162, and 170. A 1; half-length repeat occupies 155–161 (SPRRRTP). The segment at 155–177 (SPRRRTPSPRRRRSQSPRRRRSQ) is 3 X 8 AA repeats of S-P-R-R-R-[PR]-S-Q. The short motif at 158–175 (RRTPSPRRRRSQSPRRRR) is the Bipartite nuclear localization signal element. Tandem repeats lie at residues 162 to 169 (SPRRRRSQ) and 170 to 177 (SPRRRRSQ). The tract at residues 177-183 (QSRESQC) is RNA binding.

This sequence belongs to the orthohepadnavirus core antigen family. Homodimerizes, then multimerizes. Interacts with cytosol exposed regions of viral L glycoprotein present in the reticulum-to-Golgi compartment. Interacts with human FLNB. Phosphorylated form interacts with host importin alpha; this interaction depends on the exposure of the NLS, which itself depends upon genome maturation and/or phosphorylation of the capsid protein. Interacts with host NUP153. In terms of processing, phosphorylated by host SRPK1, SRPK2, and maybe protein kinase C or GAPDH. Phosphorylation is critical for pregenomic RNA packaging. Protein kinase C phosphorylation is stimulated by HBx protein and may play a role in transport of the viral genome to the nucleus at the late step during the viral replication cycle.

It is found in the virion. It localises to the host cytoplasm. Its function is as follows. Self assembles to form an icosahedral capsid. Most capsids appear to be large particles with an icosahedral symmetry of T=4 and consist of 240 copies of capsid protein, though a fraction forms smaller T=3 particles consisting of 180 capsid proteins. Entering capsids are transported along microtubules to the nucleus. Phosphorylation of the capsid is thought to induce exposure of nuclear localization signal in the C-terminal portion of the capsid protein that allows binding to the nuclear pore complex via the importin (karyopherin-) alpha and beta. Capsids are imported in intact form through the nuclear pore into the nuclear basket, where it probably binds NUP153. Only capsids that contain the mature viral genome can release the viral DNA and capsid protein into the nucleoplasm. Immature capsids get stuck in the basket. Capsids encapsulate the pre-genomic RNA and the P protein. Pre-genomic RNA is reverse-transcribed into DNA while the capsid is still in the cytoplasm. The capsid can then either be directed to the nucleus, providing more genomes for transcription, or bud through the endoplasmic reticulum to provide new virions. The polypeptide is Capsid protein (Homo sapiens (Human)).